The following is a 213-amino-acid chain: C-type lectin domain family 4 member C (213 aa).

Topologically, residues 1–21 (MVPEEEPQDREKGLWWFQLKV) are cytoplasmic. The chain crosses the membrane as a helical; Signal-anchor for type II membrane protein span at residues 22–44 (WSMAVVSILLLSVCFTVSSVVPH). The Extracellular segment spans residues 45-213 (NFMYSKTVKR…SICKMKKIYI (169 aa)). Cystine bridges form between C70–C82 and C83–C94. Residues 90 to 207 (FQSSCYFIST…CHVPQKSICK (118 aa)) form the C-type lectin domain. N-linked (GlcNAc...) asparagine glycosylation is found at N110 and N137. 2 cysteine pairs are disulfide-bonded: C111–C206 and C180–C198. S139 contributes to the a carbohydrate binding site. The N-linked (GlcNAc...) asparagine glycan is linked to N164. Ca(2+) contacts are provided by E172, N174, and E178. A carbohydrate-binding positions include E178, 184–186 (NFR), N194, 194–195 (ND), and Q202. Ca(2+) is bound by residues N194 and D195.

In terms of assembly, homodimer. In terms of tissue distribution, expressed in plasmacytoid dendritic cells (PDCs). Constitutively expressed in immature monocyte-derived dendritic cells (iMDDC) and is significantly down-regulated upon maturation with LPS but not with TNF-alpha.

The protein resides in the cell membrane. Functionally, lectin-type cell surface receptor which may play a role in antigen capturing by dendritic cells. Specifically recognizes non-sialylated galactose-terminated biantennary glycans containing the trisaccharide epitope Gal(beta1-3/4)GlcNAc(beta1-2)Man. Binds to serum IgG. Efficiently targets ligand into antigen-processing and peptide-loading compartments for presentation to T-cells. May mediate potent inhibition of induction of IFN-alpha/beta expression in plasmacytoid dendritic cells. May act as a signaling receptor that activates protein-tyrosine kinases and mobilizes intracellular calcium. The protein is C-type lectin domain family 4 member C (CLEC4C) of Homo sapiens (Human).